A 391-amino-acid polypeptide reads, in one-letter code: Tryptophan synthase beta chain (391 aa).

Lys84 is subject to N6-(pyridoxal phosphate)lysine.

Belongs to the TrpB family. Tetramer of two alpha and two beta chains. It depends on pyridoxal 5'-phosphate as a cofactor.

The catalysed reaction is (1S,2R)-1-C-(indol-3-yl)glycerol 3-phosphate + L-serine = D-glyceraldehyde 3-phosphate + L-tryptophan + H2O. It functions in the pathway amino-acid biosynthesis; L-tryptophan biosynthesis; L-tryptophan from chorismate: step 5/5. Functionally, the beta subunit is responsible for the synthesis of L-tryptophan from indole and L-serine. The chain is Tryptophan synthase beta chain from Thermoanaerobacter sp. (strain X514).